We begin with the raw amino-acid sequence, 785 residues long: LPS-assembly protein LptD (785 aa).

The signal sequence occupies residues 1–58; that stretch reads MSCSCLCMSLYRGADRIGRFYTAHCPQDMALCMHRQKLNPLALALAAAFALNAPAALA.

Belongs to the LptD family. Component of the lipopolysaccharide transport and assembly complex. Interacts with LptE and LptA.

The protein localises to the cell outer membrane. Together with LptE, is involved in the assembly of lipopolysaccharide (LPS) at the surface of the outer membrane. This Chromobacterium violaceum (strain ATCC 12472 / DSM 30191 / JCM 1249 / CCUG 213 / NBRC 12614 / NCIMB 9131 / NCTC 9757 / MK) protein is LPS-assembly protein LptD.